The primary structure comprises 314 residues: Ribose-phosphate pyrophosphokinase (314 aa).

Residues 37–39 (DGE) and 96–97 (RQ) contribute to the ATP site. Mg(2+) is bound by residues histidine 131 and aspartate 170. The active site involves lysine 194. Residues arginine 196, aspartate 220, and 224-228 (DTGGT) each bind D-ribose 5-phosphate.

Belongs to the ribose-phosphate pyrophosphokinase family. Class I subfamily. In terms of assembly, homohexamer. Mg(2+) is required as a cofactor.

It is found in the cytoplasm. The catalysed reaction is D-ribose 5-phosphate + ATP = 5-phospho-alpha-D-ribose 1-diphosphate + AMP + H(+). The protein operates within metabolic intermediate biosynthesis; 5-phospho-alpha-D-ribose 1-diphosphate biosynthesis; 5-phospho-alpha-D-ribose 1-diphosphate from D-ribose 5-phosphate (route I): step 1/1. Functionally, involved in the biosynthesis of the central metabolite phospho-alpha-D-ribosyl-1-pyrophosphate (PRPP) via the transfer of pyrophosphoryl group from ATP to 1-hydroxyl of ribose-5-phosphate (Rib-5-P). This Vibrio cholerae serotype O1 (strain ATCC 39315 / El Tor Inaba N16961) protein is Ribose-phosphate pyrophosphokinase.